The primary structure comprises 37 residues: Large ribosomal subunit protein bL36A (37 aa).

Belongs to the bacterial ribosomal protein bL36 family.

The chain is Large ribosomal subunit protein bL36A from Actinobacillus pleuropneumoniae serotype 5b (strain L20).